A 427-amino-acid chain; its full sequence is Proteinase-activated receptor 1 (427 aa).

Positions 1–21 (MGPRWLLLWAAGLGLCSPLVS) are cleaved as a signal peptide. Positions 22–41 (ARTRGPRPGTDPTNGTLGPR) are cleaved as a propeptide — removed for receptor activation. A disordered region spans residues 23-87 (RTRGPRPGTD…RSSPPQKSPP (65 aa)). N35 carries an N-linked (GlcNAc...) asparagine glycan. Residues 42–104 (SFFLRNSNDG…SGYLTSAWLT (63 aa)) lie on the Extracellular side of the membrane. A compositionally biased stretch (acidic residues) spans 58 to 68 (PEDEDSSEGEF). N77 is a glycosylation site (N-linked (GlcNAc...) asparagine). The helical transmembrane segment at 105-130 (VFIPSVYTGVFLVSLPLNIMAVVVFV) threads the bilayer. Residues 131–139 (LKMKVKKPA) are Cytoplasmic-facing. A helical transmembrane segment spans residues 140–159 (VVYMLHLAAADVLFVCVLPF). The Extracellular portion of the chain corresponds to 160–178 (KISYYFSGSDWRFGSAMCR). Cysteines 177 and 256 form a disulfide. A helical transmembrane segment spans residues 179–200 (FVTAAFYGNMYASIMLMTAISV). The Cytoplasmic segment spans residues 201–220 (DRFLAVVYPIQSLSWRTLGR). Residues 221–241 (ASFICLAIWAMAIAGVAPLLL) traverse the membrane as a helical segment. At 242 to 270 (QEQATQVPGLNITACHDVLNQTLLEGYYS) the chain is on the extracellular side. Residues N252 and N261 are each glycosylated (N-linked (GlcNAc...) asparagine). The helical transmembrane segment at 271–290 (YYFSAFSAVFFFVPLTLSTV) threads the bilayer. Topologically, residues 291–313 (SYVSIIRCLSSSTVANQNKKSRA) are cytoplasmic. Residues 314–336 (LLLSAAVFCIFILCFGPTNILLL) form a helical membrane-spanning segment. Residues 337–351 (LHYAFLSSDPMTEAA) are Extracellular-facing. The chain crosses the membrane as a helical span at residues 352–376 (YFAYLLCVCVSSISCCIDPLIYYYA). At 377-427 (SSECQRHLFAILHCKESSDPGSCNSSGQLMPSKMDTCSSNLSSSLYKKLLT) the chain is on the cytoplasmic side. A Phosphoserine modification is found at S420.

It belongs to the G-protein coupled receptor 1 family. In terms of processing, proteolytic cleavage by thrombin generates a new N-terminus that functions as a tethered ligand. Also proteolytically cleaved by cathepsin CTSG. Post-translationally, phosphorylated in the C-terminal tail; probably mediating desensitization prior to the uncoupling and internalization of the receptor.

Its subcellular location is the cell membrane. Its function is as follows. High affinity receptor that binds the activated thrombin, leading to calcium release from intracellular stores. The thrombin-activated receptor signaling pathway is mediated through PTX-insensitive G proteins, activation of phospholipase C resulting in the production of 1D-myo-inositol 1,4,5-trisphosphate (InsP3) which binds to InsP3 receptors causing calcium release from the stores. In astrocytes, the calcium released into the cytosol allows the Ca(2+)-dependent release of L-glutamate into the synaptic cleft through BEST1, that targets the neuronal postsynaptic GRIN2A/NMDAR receptor resulting in the synaptic plasticity regulation. May play a role in platelets activation and in vascular development. Mediates up-regulation of pro-inflammatory cytokines, such as MCP-1/CCL2 and IL6, triggered by coagulation factor Xa (F10) in cardiac fibroblasts and umbilical vein endothelial cells. This is Proteinase-activated receptor 1 from Bos taurus (Bovine).